We begin with the raw amino-acid sequence, 641 residues long: MAGDCAIDTEKYSLLEDFNVDVEVENKAFETFSLCFWVYLLDSTTYPSAIIRQVHSDMSVSAPFLVLDENKKMMLLPLTLLHREAPDPVNTSSWTEVPNVSTTAKFPLQKWVHVGCEVSRNYMRLYICGELVGEQVLTSLMTNGTNSDCARKISLFSVGGDGYSVQGFIHSAEVLPSNLSASYHYTKDPPLWLSVDKPSTSGIELDEDGVWSVVSGTFCSLDVVLTNAIGQPVHKDVKVVASLLYADSGTHVEKRSDFEAFLLVSYEGIELSAEDKPCNLLNGCASFKFKLSQLSSKSDKRLFCIKFEIPEVKANYPFLETVTNQIRCISRNRDSVSSMKRIRLGEEKVSESKIVNGNGTSMEWRPQNHEEDNSSTDSENTEMRDSTAFRRYSIPDWIIFKYCLGNLTERALLLKEITNNSSDEEVSEFADQVSLYSGCSHHGYQIKMARKLIAEGTNAWNLISRNYRHVHWDNVVIEIEEHFMRIAKCSSRSLTHQDFDLLRRICGCYEYITQENFETMWCWLFPVASAVSRGLINGMWRSASPKWIEGFVTKEEAERSLQNQVPGTFILRFPTSRSWPHPDAGSVVVTYVGHDLVIHHRLLTINHICDSSERYTDAKQLQDMLLAEPELSRLGRIIRGI.

The interval 355-384 (VNGNGTSMEWRPQNHEEDNSSTDSENTEMR) is disordered. One can recognise an SH2 domain in the interval 547–641 (WIEGFVTKEE…SRLGRIIRGI (95 aa)).

In terms of processing, phosphorylated on tyrosine residues. Expressed in roots, leaves, stems and flowers.

This is SH2 domain-containing protein A from Arabidopsis thaliana (Mouse-ear cress).